The primary structure comprises 353 residues: Homeobox protein Mohawk (353 aa).

Residues 18 to 27 (RGTPDRERGS) show a composition bias toward basic and acidic residues. Residues 18-50 (RGTPDRERGSRTFSGFLDNPHTGPEVGIPDGPP) are disordered. The homeobox; TALE-type DNA-binding region spans 71 to 132 (VRHKRQALQD…NARRRLKNTV (62 aa)). Disordered stretches follow at residues 157–183 (LSVS…EEGY) and 243–302 (MGKT…PSKD).

Belongs to the TALE/IRO homeobox family.

It localises to the nucleus. In terms of biological role, may act as a morphogenetic regulator of cell adhesion. Participates in the early events that lead to differentiation. The chain is Homeobox protein Mohawk (Mkx) from Mus musculus (Mouse).